The primary structure comprises 341 residues: Serine/threonine-protein kinase-like protein At5g23170 (341 aa).

The region spanning 16-298 (FSPSKLIGKG…FGEITAEIVA (283 aa)) is the Protein kinase domain. ATP contacts are provided by residues 22–30 (IGKGSHGYV) and Lys-51. A disordered region spans residues 52 to 75 (TPSSLSPSSPSSSSSSKSEQTKKL). Low complexity predominate over residues 53–69 (PSSLSPSSPSSSSSSKS). The active-site Proton acceptor is Asp-153. The stretch at 311–332 (MSVLRRVVKLKRRKKRLRETLT) forms a coiled coil.

Belongs to the protein kinase superfamily. Ser/Thr protein kinase family. Ubiquitous. Higher expression in mature stamina and pollen.

It carries out the reaction L-seryl-[protein] + ATP = O-phospho-L-seryl-[protein] + ADP + H(+). The enzyme catalyses L-threonyl-[protein] + ATP = O-phospho-L-threonyl-[protein] + ADP + H(+). The sequence is that of Serine/threonine-protein kinase-like protein At5g23170 from Arabidopsis thaliana (Mouse-ear cress).